The primary structure comprises 376 residues: DNA-directed RNA polymerase subunit alpha (376 aa).

The tract at residues 1–259 is alpha N-terminal domain (alpha-NTD); it reads MSDNSQNLLY…KHFSIFEKMD (259 aa). An alpha C-terminal domain (alpha-CTD) region spans residues 276–376; it reads KDDILHKLVL…EKIRSKNVKG (101 aa).

The protein belongs to the RNA polymerase alpha chain family. As to quaternary structure, homodimer. The RNAP catalytic core consists of 2 alpha, 1 beta, 1 beta' and 1 omega subunit. When a sigma factor is associated with the core the holoenzyme is formed, which can initiate transcription.

It catalyses the reaction RNA(n) + a ribonucleoside 5'-triphosphate = RNA(n+1) + diphosphate. Its function is as follows. DNA-dependent RNA polymerase catalyzes the transcription of DNA into RNA using the four ribonucleoside triphosphates as substrates. This chain is DNA-directed RNA polymerase subunit alpha, found in Chlamydia felis (strain Fe/C-56) (Chlamydophila felis).